A 197-amino-acid chain; its full sequence is Ribosomal RNA large subunit methyltransferase E (197 aa).

Residues glycine 50, tryptophan 52, aspartate 67, aspartate 83, and aspartate 111 each contribute to the S-adenosyl-L-methionine site. The Proton acceptor role is filled by lysine 151.

The protein belongs to the class I-like SAM-binding methyltransferase superfamily. RNA methyltransferase RlmE family.

It localises to the cytoplasm. The catalysed reaction is uridine(2552) in 23S rRNA + S-adenosyl-L-methionine = 2'-O-methyluridine(2552) in 23S rRNA + S-adenosyl-L-homocysteine + H(+). Its function is as follows. Specifically methylates the uridine in position 2552 of 23S rRNA at the 2'-O position of the ribose in the fully assembled 50S ribosomal subunit. The polypeptide is Ribosomal RNA large subunit methyltransferase E (Thermoplasma volcanium (strain ATCC 51530 / DSM 4299 / JCM 9571 / NBRC 15438 / GSS1)).